We begin with the raw amino-acid sequence, 1218 residues long: Protein STICHEL (1218 aa).

A disordered region spans residues 24–136 (AGRVLRDPGT…SDARNGGDSY (113 aa)). Composition is skewed to polar residues over residues 32–46 (GTTSSWKSPLDSSRS), 54–73 (ASRNGGSSSQFPIRGESSTN), and 86–95 (WKTQKSSSEK). Residues 163-180 (RKSNVGSCKKKSKKKISS) carry the Bipartite nuclear localization signal motif. 2 consecutive short sequence motifs (PEST) follow at residues 273–304 (RNPSTVGSWDGTTTSVNDGDDELDDNLDLPGR) and 425–449 (RSQDGLEAVALDGEEEEGSTPETIR). Position 490-497 (490-497 (GPRGTGKT)) interacts with ATP. 4 residues coordinate Zn(2+): C509, C518, C521, and C524. A coiled-coil region spans residues 762–788 (EADMEGLKHALKLLSEAEKQLRVSNDR). Positions 802-828 (MPSPGTTHTGSSRRQSSRATDDDPASV) are disordered. A compositionally biased stretch (polar residues) spans 804 to 819 (SPGTTHTGSSRRQSSR). 2 short sequence motifs (bipartite nuclear localization signal) span residues 1178-1195 (RRSKSKQVKGTPVRSRRN) and 1196-1213 (RKSRFSLFNGCAKPRKAE).

This sequence belongs to the DnaX/STICHEL family. Interacts with BLT. Ubiquitous.

The protein resides in the nucleus. Acts as a key regulator of trichome branching through an endoreduplication-independent pathway. The sequence is that of Protein STICHEL (STI) from Arabidopsis thaliana (Mouse-ear cress).